Here is a 473-residue protein sequence, read N- to C-terminus: Photosystem II CP43 reaction center protein (473 aa).

A propeptide spanning residues 1 to 14 (MKTLYSRRRFYHVE) is cleaved from the precursor. Residue Thr15 is modified to N-acetylthreonine. Thr15 is modified (phosphothreonine). 5 consecutive transmembrane segments (helical) span residues 69–93 (LFEV…PHLA), 134–155 (LLGP…KDRN), 178–200 (KALY…RKIT), 255–275 (KPFA…LSYS), and 291–312 (WFNN…ASQA). Glu367 is a binding site for [CaMn4O5] cluster. The chain crosses the membrane as a helical span at residues 447–471 (RARAAAAGFEKGIDRDFEPVLSMTP).

This sequence belongs to the PsbB/PsbC family. PsbC subfamily. As to quaternary structure, PSII is composed of 1 copy each of membrane proteins PsbA, PsbB, PsbC, PsbD, PsbE, PsbF, PsbH, PsbI, PsbJ, PsbK, PsbL, PsbM, PsbT, PsbX, PsbY, PsbZ, Psb30/Ycf12, at least 3 peripheral proteins of the oxygen-evolving complex and a large number of cofactors. It forms dimeric complexes. Binds multiple chlorophylls and provides some of the ligands for the Ca-4Mn-5O cluster of the oxygen-evolving complex. It may also provide a ligand for a Cl- that is required for oxygen evolution. PSII binds additional chlorophylls, carotenoids and specific lipids. serves as cofactor.

The protein localises to the plastid. The protein resides in the chloroplast thylakoid membrane. Its function is as follows. One of the components of the core complex of photosystem II (PSII). It binds chlorophyll and helps catalyze the primary light-induced photochemical processes of PSII. PSII is a light-driven water:plastoquinone oxidoreductase, using light energy to abstract electrons from H(2)O, generating O(2) and a proton gradient subsequently used for ATP formation. The sequence is that of Photosystem II CP43 reaction center protein from Solanum bulbocastanum (Wild potato).